A 352-amino-acid polypeptide reads, in one-letter code: Ion-translocating oxidoreductase complex subunit D (352 aa).

4 helical membrane-spanning segments follow: residues 20-40, 42-62, 89-109, and 123-143; these read IMLL…WFFG, GTLV…ALVL, IPPL…VIIA, and PAMI…TSWL. Residue T187 is modified to FMN phosphoryl threonine. Helical transmembrane passes span 214–234, 242–262, 267–287, 301–321, and 322–342; these read ILAG…GVWL, WHIP…GWLF, LAAP…FFIL, LIFG…GGYP, and DGVA…DYYT.

The protein belongs to the NqrB/RnfD family. The complex is composed of six subunits: RsxA, RsxB, RsxC, RsxD, RsxE and RsxG. FMN serves as cofactor.

It localises to the cell inner membrane. In terms of biological role, part of a membrane-bound complex that couples electron transfer with translocation of ions across the membrane. Required to maintain the reduced state of SoxR. In Escherichia coli O127:H6 (strain E2348/69 / EPEC), this protein is Ion-translocating oxidoreductase complex subunit D.